The chain runs to 403 residues: F-box only protein 22 (403 aa).

M1 carries the post-translational modification N-acetylmethionine. Positions 21 to 67 (FVLSNLAEVVERVLTFLPAKALLRVACVCRLWRECVRRVLRTHRSVT) constitute an F-box domain. Residue T127 is modified to Phosphothreonine. The residue at position 128 (S128) is a Phosphoserine. K194 carries the N6-acetyllysine modification.

As to quaternary structure, directly interacts with SKP1 and CUL1. Interacts (via C-terminal) with KDM4A. Interacts with TP53. Interacts with MTOR; this interaction promotes 'lys-27'-linked ubiquitination of MTOR. (Microbial infection) Interacts with SARS_COV-2 protein NSP5; this interaction attenuates NSP5-mediated inhibition of innate immunity. Phosphorylated by EIF2AK4 at Thr-127 causes cytoplasmic retention of FBXO22. In terms of tissue distribution, predominantly expressed in liver, also enriched in cardiac muscle.

The protein resides in the cytoplasm. The protein localises to the nucleus. It is found in the myofibril. It localises to the sarcomere. Its subcellular location is the z line. In terms of biological role, substrate-recognition component of the SCF (SKP1-CUL1-F-box protein)-type E3 ubiquitin ligase complex that is implicated in the control of various cellular processes such as cell cycle control, transcriptional regulation, DNA damage repair, and apoptosis. Promotes the proteasome-dependent degradation of key sarcomeric proteins, such as alpha-actinin (ACTN2) and filamin-C (FLNC), essential for maintenance of normal contractile function. Acts as a key regulator of histone methylation marks namely H3K9 and H3K36 methylation through the regulation of histone demethylase KDM4A protein levels. In complex with KDM4A, also regulates the abundance of TP53 by targeting methylated TP53 for degradation at the late senescent stage. Under oxidative stress, promotes the ubiquitination and degradation of BACH1. Mechanistically, reactive oxygen species (ROS) covalently modify cysteine residues on the bZIP domain of BACH1, leading to its release from chromatin and making it accessible to FBXO22. Upon amino acid depletion, mediates 'Lys-27'-linked ubiquitination of MTOR and thereby inhibits substrate recruitment to mTORC1. Also inhibits SARS-CoV-2 replication by inducing NSP5 degradation. The sequence is that of F-box only protein 22 (FBXO22) from Homo sapiens (Human).